The primary structure comprises 56 residues: Protein hunchback (56 aa).

3 C2H2-type zinc fingers span residues 1 to 5 (HVRNH), 11 to 33 (HKCG…MKSH), and 39 to 56 (YRCA…SLKL).

It belongs to the hunchback C2H2-type zinc-finger protein family.

It is found in the nucleus. In terms of biological role, gap class segmentation protein that controls development of head structures. The chain is Protein hunchback (hb) from Bithynia tentaculata (Spire snail).